Consider the following 171-residue polypeptide: 3-hydroxydecanoyl-[acyl-carrier-protein] dehydratase (171 aa).

The active site involves His70.

This sequence belongs to the thioester dehydratase family. FabA subfamily. As to quaternary structure, homodimer.

Its subcellular location is the cytoplasm. It catalyses the reaction a (3R)-hydroxyacyl-[ACP] = a (2E)-enoyl-[ACP] + H2O. The enzyme catalyses (3R)-hydroxydecanoyl-[ACP] = (2E)-decenoyl-[ACP] + H2O. The catalysed reaction is (2E)-decenoyl-[ACP] = (3Z)-decenoyl-[ACP]. It participates in lipid metabolism; fatty acid biosynthesis. Necessary for the introduction of cis unsaturation into fatty acids. Catalyzes the dehydration of (3R)-3-hydroxydecanoyl-ACP to E-(2)-decenoyl-ACP and then its isomerization to Z-(3)-decenoyl-ACP. Can catalyze the dehydratase reaction for beta-hydroxyacyl-ACPs with saturated chain lengths up to 16:0, being most active on intermediate chain length. This is 3-hydroxydecanoyl-[acyl-carrier-protein] dehydratase from Shewanella sp. (strain ANA-3).